The following is a 1342-amino-acid chain: Restriction of telomere capping protein 1 (1342 aa).

The segment at 1 to 39 (MSLSPHVENASIPKGSTPIPKNRNVSSIGKGEFLGSSSS) is disordered. WD repeat units lie at residues 207–248 (NKFS…SIDN), 256–296 (EHTR…SKSS), 305–342 (TASD…YKFA), 367–406 (AHTG…NAAE), 439–486 (NTGY…IPKH), and 489–527 (LSET…TVLE). 5 disordered regions span residues 559 to 593 (PELQ…IGGI), 600 to 619 (TGLT…GPTF), 630 to 651 (ASSF…ENRE), 736 to 766 (KNAT…DDDD), and 788 to 831 (LMNE…DRSR). The segment covering 630 to 644 (ASSFNSSSASLTSLT) has biased composition (low complexity). Residues 753–766 (DDGDDDDDDDDDDD) are compositionally biased toward acidic residues. The segment covering 815-824 (SSISSISASR) has biased composition (low complexity). The WD 7 repeat unit spans residues 844-884 (KIQTLVDLISIATHNASVYLSIDDLTNFKIWILIRDSLLWD). Disordered regions lie at residues 942–963 (AFRA…KLKE) and 1014–1047 (DEHE…PILQ). Basic and acidic residues-rich tracts occupy residues 952–963 (DAEKKPVSKLKE) and 1016–1028 (HEHQ…HDSP). 6 positions are modified to phosphoserine: S1037, S1081, S1088, S1090, S1124, and S1134. WD repeat units follow at residues 1130-1170 (SRPD…KQLY) and 1217-1256 (LFGI…LITN). The RING-type; degenerate zinc finger occupies 1294–1336 (CVLCERPLKKLTMVILPCGHEGHFQCIQEWFLDENEQECPGGC).

Belongs to the WD repeat RTC1 family.

The protein localises to the vacuole. May be involved in a process influencing telomere capping. This chain is Restriction of telomere capping protein 1 (RTC1), found in Saccharomyces cerevisiae (strain JAY291) (Baker's yeast).